The following is a 927-amino-acid chain: Lysine-specific demethylase JMJ28 (927 aa).

Residues 7 to 52 (VPDEFRCNRSDGKQWRCKRRALEGKKMCESHHSQQSLKRSKQKVAE) enclose the WRC domain. The Nuclear localization signal 1 motif lies at 30–37 (GKKMCESH). The disordered stretch occupies residues 30 to 92 (GKKMCESHHS…RLGKSKRKRV (63 aa)). Basic residues predominate over residues 80-91 (RSKRLGKSKRKR). The Nuclear localization signal 2 motif lies at 127–134 (EKRKRLPN). Positions 227, 230, 241, 244, 250, 253, 269, and 272 each coordinate Zn(2+). Residues 227 to 273 (CHWCGTRGFGDLISCLSCEREFFCIDCIEKRNKGSKEEVEKKCPVCR) form an RING-type; degenerate zinc finger. Residues 330-339 (ENDAEKKEGN) show a composition bias toward basic and acidic residues. Disordered regions lie at residues 330-359 (ENDA…QPCS) and 701-736 (RSKN…SQHC). A JmjC domain is found at 601-881 (FPNHYAEILN…ESIKRVKELN (281 aa)).

Belongs to the JARID1 histone demethylase family. Interacts with the FBH transcription factors FBH1, FBH2, FBH3 and FBH4. Fe(2+) serves as cofactor. In terms of tissue distribution, expressed in inflorescences, flowers, roots, siliques, leaves and stems, especially in the vasculature (mainly phloem), with highest levels in floral organs. Present at high levels in flowers, shoot apex and young seeds, but observed at low levels in dry seeds, root apex and anthers.

The protein localises to the nucleus. In terms of biological role, may function as histone H3 lysine demethylase and be involved in regulation of gene expression. Regulates flowering time by promoting CONSTANS (CO) and CONSTANS-LIKE genes (e.g. COL2 and COL5) expression via interaction with FBH transcription factors (FBH1, FBH2, FBH3 and FBH4) at their loci to remove H3K9me2 repressive histone marks. Also modulates the expression of several developmental genes such as MYB30, TFS1, AGL6 and RVE2. The sequence is that of Lysine-specific demethylase JMJ28 from Arabidopsis thaliana (Mouse-ear cress).